A 321-amino-acid polypeptide reads, in one-letter code: MIFATLEHILTHISFSIISIVITIHLVTLLVHEIVGLCDPSEKGMIAAFFCITGLLVTRWIYSRHFPLSDLYESLMFLSWSFSIIHMVPKIWNHKNDLSAITAPSAIFTQGFATSGLSTEMHQSAILVPALQSQWLMMHVSMMLLSYAALLCGSLLSVALLVITFRKNIGIVGKSNHLLIGSFSFDEIHYLNEKRNVLQNTSFLSFRNYHRYQLTQRLDYWSYRVISLGFTFLTIGILSGAVWANEAWGSYWNWDPKETWAFITWTIFAIYLHTRTNRSLQGVNSAIVASMGFLIIWICYFGVNLLGIGLHSYGSFTLTSN.

7 consecutive transmembrane segments (helical) span residues 17-37, 43-63, 71-91, 143-163, 225-245, 258-273, and 286-306; these read IISIVITIHLVTLLVHEIVGL, KGMIAAFFCITGLLVTRWIYS, LYESLMFLSWSFSIIHMVPKI, MLLSYAALLCGSLLSVALLVI, VISLGFTFLTIGILSGAVWAN, ETWAFITWTIFAIYLH, and AIVASMGFLIIWICYFGVNLL.

The protein belongs to the CcmF/CycK/Ccl1/NrfE/CcsA family. May interact with Ccs1.

It localises to the plastid. The protein localises to the chloroplast thylakoid membrane. Functionally, required during biogenesis of c-type cytochromes (cytochrome c6 and cytochrome f) at the step of heme attachment. In Liriodendron tulipifera (Tuliptree), this protein is Cytochrome c biogenesis protein CcsA.